The sequence spans 401 residues: Chromate transport protein (401 aa).

12 consecutive transmembrane segments (helical) span residues 26–46 (LVMY…ALAG), 67–87 (GLAL…IYLG), 93–113 (IVGA…MVLA), 124–144 (LTWM…IIAI), 172–192 (VITE…VWFW), 214–234 (AASG…GVFF), 237–257 (AGAF…GGVV), 272–294 (VAVA…YLVA), 299–321 (ACVA…APYF), 330–350 (ILAF…GAVI), 356–376 (SIVD…LLKF), and 379–399 (LSEP…YPLL).

It belongs to the chromate ion transporter (CHR) (TC 2.A.51) family.

The protein resides in the cell inner membrane. In terms of biological role, this protein reduces chromate accumulation and is essential for chromate resistance. This is Chromate transport protein from Cupriavidus metallidurans (strain ATCC 43123 / DSM 2839 / NBRC 102507 / CH34) (Ralstonia metallidurans).